Consider the following 600-residue polypeptide: Glutamine--fructose-6-phosphate aminotransferase [isomerizing] (600 aa).

Cys2 functions as the Nucleophile; for GATase activity in the catalytic mechanism. The Glutamine amidotransferase type-2 domain occupies 2-217; the sequence is CGIVGFIGEQ…DKEIVIVTKE (216 aa). 2 consecutive SIS domains span residues 283–422 and 452–590; these read IRNA…AKGE and LAKQ…VDKP. The active-site For Fru-6P isomerization activity is Lys595.

In terms of assembly, homodimer.

Its subcellular location is the cytoplasm. It catalyses the reaction D-fructose 6-phosphate + L-glutamine = D-glucosamine 6-phosphate + L-glutamate. In terms of biological role, catalyzes the first step in hexosamine metabolism, converting fructose-6P into glucosamine-6P using glutamine as a nitrogen source. The polypeptide is Glutamine--fructose-6-phosphate aminotransferase [isomerizing] (Bacillus cereus (strain ATCC 14579 / DSM 31 / CCUG 7414 / JCM 2152 / NBRC 15305 / NCIMB 9373 / NCTC 2599 / NRRL B-3711)).